The sequence spans 697 residues: DNA ligase (697 aa).

NAD(+) is bound by residues 41–45 (DPVYD), 90–91 (SL), and glutamate 129. Residue lysine 131 is the N6-AMP-lysine intermediate of the active site. Residues arginine 152, glutamate 189, lysine 308, and lysine 332 each coordinate NAD(+). Positions 426, 429, 444, and 449 each coordinate Zn(2+). A BRCT domain is found at 617 to 697 (AANHHLTGST…ALQNMLRGST (81 aa)).

The protein belongs to the NAD-dependent DNA ligase family. LigA subfamily. Mg(2+) is required as a cofactor. Requires Mn(2+) as cofactor.

The catalysed reaction is NAD(+) + (deoxyribonucleotide)n-3'-hydroxyl + 5'-phospho-(deoxyribonucleotide)m = (deoxyribonucleotide)n+m + AMP + beta-nicotinamide D-nucleotide.. DNA ligase that catalyzes the formation of phosphodiester linkages between 5'-phosphoryl and 3'-hydroxyl groups in double-stranded DNA using NAD as a coenzyme and as the energy source for the reaction. It is essential for DNA replication and repair of damaged DNA. The polypeptide is DNA ligase (Synechococcus sp. (strain CC9311)).